We begin with the raw amino-acid sequence, 373 residues long: Carnosine N-methyltransferase (373 aa).

7 residues coordinate S-adenosyl-L-methionine: glutamine 110, arginine 113, glycine 154, glutamate 175, aspartate 242, phenylalanine 243, and cysteine 262. Aspartate 266 contributes to the carnosine binding site. Residue tyrosine 274 coordinates S-adenosyl-L-methionine. Histidine 297 and tyrosine 356 together coordinate carnosine.

The protein belongs to the carnosine N-methyltransferase family.

The protein localises to the cytoplasm. Its subcellular location is the nucleus. It catalyses the reaction carnosine + S-adenosyl-L-methionine = anserine + S-adenosyl-L-homocysteine + H(+). Functionally, N-methyltransferase that mediates the formation of anserine (beta-alanyl-N(Pi)-methyl-L-histidine) from carnosine. Also methylates other L-histidine-containing di- and tripeptides such as Gly-Gly-His, Gly-His and homocarnosine (GABA-His). This Schizosaccharomyces pombe (strain 972 / ATCC 24843) (Fission yeast) protein is Carnosine N-methyltransferase.